Here is a 277-residue protein sequence, read N- to C-terminus: Large ribosomal subunit protein uL2 (277 aa).

The interval 219-277 is disordered; the sequence is TVRGSVMNPNDHPHGGGEGKAPVGRKAPSTPWGKPALGLKTRNKKAKSNKLIVRRRNEK. A compositionally biased stretch (basic residues) spans 259–277; it reads TRNKKAKSNKLIVRRRNEK.

This sequence belongs to the universal ribosomal protein uL2 family. Part of the 50S ribosomal subunit. Forms a bridge to the 30S subunit in the 70S ribosome.

In terms of biological role, one of the primary rRNA binding proteins. Required for association of the 30S and 50S subunits to form the 70S ribosome, for tRNA binding and peptide bond formation. It has been suggested to have peptidyltransferase activity; this is somewhat controversial. Makes several contacts with the 16S rRNA in the 70S ribosome. The sequence is that of Large ribosomal subunit protein uL2 from Streptococcus equi subsp. zooepidemicus (strain MGCS10565).